Here is a 207-residue protein sequence, read N- to C-terminus: MIOREX complex component 11 (207 aa).

A mitochondrion-targeting transit peptide spans 1 to 46; that stretch reads MTVMNLFFRPCQLQMGSGPLELMLKRPTQLTTFMNTRPGGSTQIRF. Residues 47 to 98 lie on the Mitochondrial matrix side of the membrane; sequence ISGNLDPVKRREDRLRKIFSKSRLLTRLNKNPKFSHYFDRLSEAGTVPTLTS. A helical transmembrane segment spans residues 99 to 119; it reads FFILHEVTAILPLFLLWWLLY. Topologically, residues 120–177 are mitochondrial intermembrane; that stretch reads NLDLSDDFKLPNFLNGLMDSCHTAMEKFVGKRYQECLNKNKLILSGTVAYVTVKLLYP. The chain crosses the membrane as a helical span at residues 178–198; that stretch reads VRIFISIWGAPYFGKWLLLPF. Residues 199–207 are Mitochondrial matrix-facing; the sequence is QKLKHLIKK.

Belongs to the MRX11 family. As to quaternary structure, associates with the mitochondrial ribosome.

It localises to the mitochondrion. The protein localises to the mitochondrion inner membrane. Its function is as follows. Component of MIOREX complexes, large expressome-like assemblies of ribosomes with factors involved in all the steps of post-transcriptional gene expression. The chain is MIOREX complex component 11 from Saccharomyces cerevisiae (strain ATCC 204508 / S288c) (Baker's yeast).